We begin with the raw amino-acid sequence, 77 residues long: ATP synthase subunit c (77 aa).

The next 2 membrane-spanning stretches (helical) occupy residues 13–33 and 55–75; these read IATV…GIVA and FLGI…YFIF.

This sequence belongs to the ATPase C chain family. F-type ATPases have 2 components, F(1) - the catalytic core - and F(0) - the membrane proton channel. F(1) has five subunits: alpha(3), beta(3), gamma(1), delta(1), epsilon(1). F(0) has three main subunits: a(1), b(2) and c(10-14). The alpha and beta chains form an alternating ring which encloses part of the gamma chain. F(1) is attached to F(0) by a central stalk formed by the gamma and epsilon chains, while a peripheral stalk is formed by the delta and b chains.

The protein localises to the cell membrane. Its function is as follows. F(1)F(0) ATP synthase produces ATP from ADP in the presence of a proton or sodium gradient. F-type ATPases consist of two structural domains, F(1) containing the extramembraneous catalytic core and F(0) containing the membrane proton channel, linked together by a central stalk and a peripheral stalk. During catalysis, ATP synthesis in the catalytic domain of F(1) is coupled via a rotary mechanism of the central stalk subunits to proton translocation. Functionally, key component of the F(0) channel; it plays a direct role in translocation across the membrane. A homomeric c-ring of between 10-14 subunits forms the central stalk rotor element with the F(1) delta and epsilon subunits. The sequence is that of ATP synthase subunit c from Clavibacter michiganensis subsp. michiganensis (strain NCPPB 382).